Consider the following 75-residue polypeptide: YTLLCYKTPSPINAETCPPGENLCYTKMWCDAWCSSRGKVVELGCAATCPSKKPYEEVTCCSTDKCNPHPKQRPD.

The N-terminal stretch at 1–2 (YT) is a signal peptide. 5 cysteine pairs are disulfide-bonded: C5/C24, C17/C45, C30/C34, C49/C60, and C61/C66.

This sequence belongs to the three-finger toxin family. Long-chain subfamily. Type II alpha-neurotoxin sub-subfamily. In terms of assembly, monomer in solution, homodimer in crystal state. As to expression, expressed by the venom gland.

Its subcellular location is the secreted. Functionally, binds to muscular and neuronal nicotinic acetylcholine receptor (nAChR) and inhibits acetylcholine from binding to the receptor, thereby impairing neuromuscular and neuronal transmission. Blocks muscle type nAChR. Also binds with high affinity to alpha-7/CHRNA7 nAChRs. In addition, shows a weak inhibition of neuronal alpha-3-beta-2/CHRNA3-CHRNB2 nAChR. Selectively binds to alpha-1-delta subunit interface of the mouse muscle nicotinic acetylcholine receptor, with a 10-fold higher affinity for the adult than for the fetal receptors. In vivo, when intraperitoneally injected into mice, causes flaccid paralysis and respiratory distress, followed by death within 2-4 hours. This is Alpha-elapitoxin-Bc2c from Bungarus candidus (Malayan krait).